The following is a 189-amino-acid chain: Interferon alpha-6 (189 aa).

The N-terminal stretch at 1 to 23 (MARLCAFLMVLAVLSYWPTCSLG) is a signal peptide. Disulfide bonds link cysteine 24–cysteine 122 and cysteine 52–cysteine 162. An N-linked (GlcNAc...) asparagine glycan is attached at asparagine 101.

It belongs to the alpha/beta interferon family.

It is found in the secreted. In terms of biological role, produced by macrophages, IFN-alpha have antiviral activities. Interferon stimulates the production of two enzymes: a protein kinase and an oligoadenylate synthetase. The sequence is that of Interferon alpha-6 (Ifna6) from Mus musculus (Mouse).